Consider the following 128-residue polypeptide: MARRKTTKRKVKKNVPFGIAHIHTTFNNTIVTITDANGNAITWSSAGALGFKGSRKSTPFAAQLAAEAVAKAAMEHGMAKIEVFIAGPGPGREAAVRSLQAAGLEITAIKDVTAVPHNGCRPPKSPRG.

The protein belongs to the universal ribosomal protein uS11 family. In terms of assembly, part of the 30S ribosomal subunit. Interacts with proteins S7 and S18. Binds to IF-3.

In terms of biological role, located on the platform of the 30S subunit, it bridges several disparate RNA helices of the 16S rRNA. Forms part of the Shine-Dalgarno cleft in the 70S ribosome. This Phytoplasma australiense protein is Small ribosomal subunit protein uS11.